The sequence spans 102 residues: Hemoglobin subunit beta-Z (102 aa).

Residues F1–H102 form the Globin domain. Heme b contacts are provided by H19 and H48.

The protein belongs to the globin family. As to quaternary structure, heterotetramer of two alpha chains and two beta chains.

This is an embryonic beta chain. This Mesocricetus auratus (Golden hamster) protein is Hemoglobin subunit beta-Z (HBBZ).